The following is a 449-amino-acid chain: Glucose-6-phosphate isomerase (449 aa).

Glutamate 291 functions as the Proton donor in the catalytic mechanism. Active-site residues include histidine 312 and lysine 426.

It belongs to the GPI family.

The protein localises to the cytoplasm. It catalyses the reaction alpha-D-glucose 6-phosphate = beta-D-fructose 6-phosphate. It functions in the pathway carbohydrate biosynthesis; gluconeogenesis. The protein operates within carbohydrate degradation; glycolysis; D-glyceraldehyde 3-phosphate and glycerone phosphate from D-glucose: step 2/4. Its function is as follows. Catalyzes the reversible isomerization of glucose-6-phosphate to fructose-6-phosphate. The chain is Glucose-6-phosphate isomerase from Clostridium botulinum (strain Eklund 17B / Type B).